A 401-amino-acid polypeptide reads, in one-letter code: S-adenosylmethionine synthase (401 aa).

Residue His-16 coordinates ATP. A Mg(2+)-binding site is contributed by Asp-18. Glu-44 provides a ligand contact to K(+). The L-methionine site is built by Glu-57 and Gln-109. The tract at residues 109-119 (QSAHIAQGVDA) is flexible loop. Residues 174-176 (DAK), Asp-251, 257-258 (RK), Ala-274, and Lys-278 each bind ATP. Asp-251 lines the L-methionine pocket. Lys-282 is a binding site for L-methionine.

Belongs to the AdoMet synthase family. Homotetramer; dimer of dimers. It depends on Mg(2+) as a cofactor. K(+) serves as cofactor.

The protein localises to the cytoplasm. The catalysed reaction is L-methionine + ATP + H2O = S-adenosyl-L-methionine + phosphate + diphosphate. Its pathway is amino-acid biosynthesis; S-adenosyl-L-methionine biosynthesis; S-adenosyl-L-methionine from L-methionine: step 1/1. Its function is as follows. Catalyzes the formation of S-adenosylmethionine (AdoMet) from methionine and ATP. The overall synthetic reaction is composed of two sequential steps, AdoMet formation and the subsequent tripolyphosphate hydrolysis which occurs prior to release of AdoMet from the enzyme. This is S-adenosylmethionine synthase from Novosphingobium aromaticivorans (strain ATCC 700278 / DSM 12444 / CCUG 56034 / CIP 105152 / NBRC 16084 / F199).